Reading from the N-terminus, the 199-residue chain is Putative pseudouridine methyltransferase (199 aa).

S-adenosyl-L-methionine-binding residues include M132 and C186.

It belongs to the methyltransferase superfamily. TrmY family.

Its subcellular location is the cytoplasm. The protein is Putative pseudouridine methyltransferase of Vibrio atlanticus (strain LGP32) (Vibrio splendidus (strain Mel32)).